A 69-amino-acid chain; its full sequence is DNA gyrase inhibitor YacG (69 aa).

Positions 1–15 (MSDEPEHTAKVEPLR) are enriched in basic and acidic residues. Positions 1–22 (MSDEPEHTAKVEPLRKPLPCPE) are disordered. Zn(2+)-binding residues include Cys20, Cys23, Cys35, and Cys39.

The protein belongs to the DNA gyrase inhibitor YacG family. As to quaternary structure, interacts with GyrB. Requires Zn(2+) as cofactor.

Functionally, inhibits all the catalytic activities of DNA gyrase by preventing its interaction with DNA. Acts by binding directly to the C-terminal domain of GyrB, which probably disrupts DNA binding by the gyrase. In Allorhizobium ampelinum (strain ATCC BAA-846 / DSM 112012 / S4) (Agrobacterium vitis (strain S4)), this protein is DNA gyrase inhibitor YacG.